Here is a 245-residue protein sequence, read N- to C-terminus: Demethylmenaquinone methyltransferase (245 aa).

S-adenosyl-L-methionine is bound by residues T58, D79, and N106–A107.

Belongs to the class I-like SAM-binding methyltransferase superfamily. MenG/UbiE family.

The enzyme catalyses a 2-demethylmenaquinol + S-adenosyl-L-methionine = a menaquinol + S-adenosyl-L-homocysteine + H(+). It functions in the pathway quinol/quinone metabolism; menaquinone biosynthesis; menaquinol from 1,4-dihydroxy-2-naphthoate: step 2/2. In terms of biological role, methyltransferase required for the conversion of demethylmenaquinol (DMKH2) to menaquinol (MKH2). This Halalkalibacterium halodurans (strain ATCC BAA-125 / DSM 18197 / FERM 7344 / JCM 9153 / C-125) (Bacillus halodurans) protein is Demethylmenaquinone methyltransferase.